The primary structure comprises 198 residues: Recombination protein RecR (198 aa).

A C4-type zinc finger spans residues 57-72; it reads CSVCGHITDRDPCYIC. In terms of domain architecture, Toprim spans 80–175; that stretch reads SVVCVVQEPK…KVTRIAHGLP (96 aa).

It belongs to the RecR family.

Functionally, may play a role in DNA repair. It seems to be involved in an RecBC-independent recombinational process of DNA repair. It may act with RecF and RecO. The chain is Recombination protein RecR from Bacillus mycoides (strain KBAB4) (Bacillus weihenstephanensis).